A 146-amino-acid chain; its full sequence is D-aminoacyl-tRNA deacylase (146 aa).

The Gly-cisPro motif, important for rejection of L-amino acids motif lies at 137–138 (GP).

This sequence belongs to the DTD family. In terms of assembly, homodimer.

The protein resides in the cytoplasm. The catalysed reaction is glycyl-tRNA(Ala) + H2O = tRNA(Ala) + glycine + H(+). The enzyme catalyses a D-aminoacyl-tRNA + H2O = a tRNA + a D-alpha-amino acid + H(+). In terms of biological role, an aminoacyl-tRNA editing enzyme that deacylates mischarged D-aminoacyl-tRNAs. Also deacylates mischarged glycyl-tRNA(Ala), protecting cells against glycine mischarging by AlaRS. Acts via tRNA-based rather than protein-based catalysis; rejects L-amino acids rather than detecting D-amino acids in the active site. By recycling D-aminoacyl-tRNA to D-amino acids and free tRNA molecules, this enzyme counteracts the toxicity associated with the formation of D-aminoacyl-tRNA entities in vivo and helps enforce protein L-homochirality. The protein is D-aminoacyl-tRNA deacylase of Bacillus thuringiensis (strain Al Hakam).